We begin with the raw amino-acid sequence, 146 residues long: UPF0306 protein HD_1359 (146 aa).

Belongs to the UPF0306 family.

This is UPF0306 protein HD_1359 from Haemophilus ducreyi (strain 35000HP / ATCC 700724).